The primary structure comprises 89 residues: Small ribosomal subunit protein uS15 (89 aa).

The protein belongs to the universal ribosomal protein uS15 family. In terms of assembly, part of the 30S ribosomal subunit. Forms a bridge to the 50S subunit in the 70S ribosome, contacting the 23S rRNA.

Its function is as follows. One of the primary rRNA binding proteins, it binds directly to 16S rRNA where it helps nucleate assembly of the platform of the 30S subunit by binding and bridging several RNA helices of the 16S rRNA. In terms of biological role, forms an intersubunit bridge (bridge B4) with the 23S rRNA of the 50S subunit in the ribosome. This is Small ribosomal subunit protein uS15 from Cupriavidus necator (strain ATCC 17699 / DSM 428 / KCTC 22496 / NCIMB 10442 / H16 / Stanier 337) (Ralstonia eutropha).